The sequence spans 2162 residues: Calpain-type cysteine protease ADL1 (2162 aa).

A signal peptide spans 1 to 33 (MEEEEHRGVVLVCSICGFLFAVLGPLSFWILWA). Residues 34 to 70 (VNWRPWRLYSWIYARKWPAYVQGPQLSTLCSFFTLFA) are Extracellular-facing. Residues 71-91 (WLVVVSPITVLLVWGGILIAL) form a helical membrane-spanning segment. Topologically, residues 92 to 95 (LERN) are cytoplasmic. Residues 96–116 (IIGLAVIMVGVALLLSFYSIM) form a helical membrane-spanning segment. Over 117-127 (LWWRTQWQSSK) the chain is Extracellular. A helical membrane pass occupies residues 128–148 (AVAYLLLLAVGLLCAYEFCAV). The Cytoplasmic segment spans residues 149 to 164 (YVTTGASASELNSPSG). Residues 165–185 (FFFGVSAISLAINMLFISKIL) form a helical membrane-spanning segment. Over 186-236 (FNGSGFDVDEYVRRLYKFAYSDCVEVAPVSCSPDPPDPSELYMTKSSRVLH) the chain is Extracellular. Residues 237–257 (LGLLYLCSLMVLVVYSILYGL) form a helical membrane-spanning segment. Residues 258-264 (TSKEARW) lie on the Cytoplasmic side of the membrane. Residues 265–285 (LGALTSVAVVILDWNLGLCSF) form a helical membrane-spanning segment. At 286-294 (RFELLKSRM) the chain is on the extracellular side. The helical transmembrane segment at 295 to 315 (IALFVAGTSRVFLICFGVHYW) threads the bilayer. The Cytoplasmic segment spans residues 316–320 (YLGHC). The helical transmembrane segment at 321–341 (ISYAFVASVLLAAAVSCWLSI) threads the bilayer. The Extracellular portion of the chain corresponds to 342–626 (SNPSVARIDA…LMFHQVAGSP (285 aa)). Residues 366-403 (KGQTSSSNSSDGCGSSVKRSSGSVEAGPHGNATDSMYR) form a disordered region. Residues 370–381 (SSSNSSDGCGSS) are compositionally biased toward low complexity. A helical membrane pass occupies residues 627–647 (IRAFVVFTLIFIIETVTVAVH). At 648 to 663 (RPKPIKVINATHEQFE) the chain is on the cytoplasmic side. Residues 664 to 684 (FGFSILLLSPVVCSIMAFIWS) traverse the membrane as a helical segment. At 685-697 (LCAEEMTMTSKPR) the chain is on the extracellular side. The helical transmembrane segment at 698 to 718 (KYGFIAWLLSTCVGLLLSFLS) threads the bilayer. Topologically, residues 719 to 722 (KSSV) are cytoplasmic. Residues 723–743 (ILGLSLTVPLMVACLSFAIPI) form a helical membrane-spanning segment. At 744–773 (WMRNGYRFWIPGGELDSRENIRQAPGKKER) the chain is on the extracellular side. Residues 774–794 (ALFAISITVFTASVIGLGAIV) traverse the membrane as a helical segment. The Cytoplasmic portion of the chain corresponds to 795 to 825 (SAKPLDALGYKGWDADKKSFYSPYATSMYLG). A helical membrane pass occupies residues 826-846 (WALSSTIAVLATGVIPIVAWF). Residues 847–856 (ATYRFSPSSA) lie on the Extracellular side of the membrane. Residues 857 to 877 (ICVGLFATVLVSFCGVSYWGV) traverse the membrane as a helical segment. At 878 to 890 (VNSRQDGVPLKAD) the chain is on the cytoplasmic side. The chain crosses the membrane as a helical span at residues 891 to 911 (FLAALLPLLCIPAVFSLFTGM). Residues 912 to 924 (YKWKDDDWKISRG) lie on the Extracellular side of the membrane. Residues 925–945 (VYLFVGMGVLLLLGAISAVIV) form a helical membrane-spanning segment. Topologically, residues 946–949 (TIRP) are cytoplasmic. Residues 950-970 (WTVGVACLLVILFLVFAIGVI) form a helical membrane-spanning segment. Residues 971 to 984 (HYWTSNNFYLTRTQ) are Extracellular-facing. The helical transmembrane segment at 985-1005 (MLLVCSLAFLLALAAFLMGLF) threads the bilayer. The Cytoplasmic portion of the chain corresponds to 1006–1019 (QEKPFVGASIGYFS). The chain crosses the membrane as a helical span at residues 1020–1040 (FLFLLTGRALTVLLSPPIVVY). The Extracellular segment spans residues 1041-1063 (SPRVLPVYVYDAHADSAKNVSYA). The chain crosses the membrane as a helical span at residues 1064–1084 (FLILYGIALATEVWGVIASLI). Topologically, residues 1085–2162 (LNPPFIGAAI…TKAPIKLEAV (1078 aa)) are cytoplasmic. Phosphoserine occurs at positions 1372 and 1377. Residues 1418 to 1611 (TGRHCGEIDL…ICSAEYGLFD (194 aa)) form the Calpain catalytic 1 domain. Serine 1668 is modified (phosphoserine). Residues 1706 to 2008 (NFTDQEFPPD…FRSIYVCRVY (303 aa)) form the Calpain catalytic 2 domain. Active-site residues include cysteine 1772, histidine 1930, and asparagine 1950.

It belongs to the peptidase C2 family. In terms of processing, autocatalytic proteolytic cleavage leading to the production of mainly cytoplasmic localized subproducts of about 85 and 120 kDa. As to expression, ubiquitously expressed with higher levels in embryos, vasculatures, leaf primordia, leaf margins, and shoot apical meristem (SAM).

It localises to the endoplasmic reticulum membrane. Its subcellular location is the cytoplasm. It is found in the cell membrane. The protein localises to the endosome membrane. Its function is as follows. Essential protease involved in epiderm development. Required for aleurone cell development in the endosperm probably by maintaining and restricting the aleurone and embryonic epidermal L1 cell-layer fates as well as meristems organization. Involved in the maintenance of adaxial/abaxial axis information in developing leaves, probably by regulating cell proliferation and expansion. Does not need calcium ions to be active. This is Calpain-type cysteine protease ADL1 (ADL1) from Oryza sativa subsp. japonica (Rice).